The following is a 60-amino-acid chain: Cytochrome c oxidase subunit 9, mitochondrial (60 aa).

Over 1-15 (MSAIAPITGTIRKRI) the chain is Mitochondrial matrix. The helical transmembrane segment at 16–38 (LADITIGFAIGGAMASYWWWGFH) threads the bilayer. Over 39–57 (KNIINKREAYYAKLAEQKA) the chain is Mitochondrial intermembrane. A propeptide spans 58–60 (AEN) (removed in mature form).

It belongs to the fungal cytochrome c oxidase subunit 7a family. As to quaternary structure, component of the cytochrome c oxidase (complex IV, CIV), a multisubunit enzyme composed of a catalytic core of 3 subunits and several supernumerary subunits. The complex exists as a monomer or a dimer and forms supercomplexes (SCs) in the inner mitochondrial membrane with ubiquinol-cytochrome c oxidoreductase (cytochrome b-c1 complex, complex III, CIII).

It is found in the mitochondrion inner membrane. It participates in energy metabolism; oxidative phosphorylation. Component of the cytochrome c oxidase, the last enzyme in the mitochondrial electron transport chain which drives oxidative phosphorylation. The respiratory chain contains 3 multisubunit complexes succinate dehydrogenase (complex II, CII), ubiquinol-cytochrome c oxidoreductase (cytochrome b-c1 complex, complex III, CIII) and cytochrome c oxidase (complex IV, CIV), that cooperate to transfer electrons derived from NADH and succinate to molecular oxygen, creating an electrochemical gradient over the inner membrane that drives transmembrane transport and the ATP synthase. Cytochrome c oxidase is the component of the respiratory chain that catalyzes the reduction of oxygen to water. Electrons originating from reduced cytochrome c in the intermembrane space (IMS) are transferred via the dinuclear copper A center (CU(A)) of subunit 2 and heme A of subunit 1 to the active site in subunit 1, a binuclear center (BNC) formed by heme A3 and copper B (CU(B)). The BNC reduces molecular oxygen to 2 water molecules using 4 electrons from cytochrome c in the IMS and 4 protons from the mitochondrial matrix. The chain is Cytochrome c oxidase subunit 9, mitochondrial (COX9) from Kluyveromyces lactis (strain ATCC 8585 / CBS 2359 / DSM 70799 / NBRC 1267 / NRRL Y-1140 / WM37) (Yeast).